The following is a 273-amino-acid chain: Hemin import ATP-binding protein HmuV (273 aa).

Positions 2–256 (LTAHHLDVAR…AHIAQCYGFA (255 aa)) constitute an ABC transporter domain. 34 to 41 (GRNGAGKS) serves as a coordination point for ATP.

It belongs to the ABC transporter superfamily. Heme (hemin) importer (TC 3.A.1.14.5) family. The complex is composed of two ATP-binding proteins (HmuV), two transmembrane proteins (HmuU) and a solute-binding protein (HmuT).

It localises to the cell inner membrane. Part of the ABC transporter complex HmuTUV involved in hemin import. Responsible for energy coupling to the transport system. The polypeptide is Hemin import ATP-binding protein HmuV (Burkholderia lata (strain ATCC 17760 / DSM 23089 / LMG 22485 / NCIMB 9086 / R18194 / 383)).